The chain runs to 493 residues: Cytoplasmic tRNA 2-thiolation protein 2 (493 aa).

S489 bears the Phosphoserine mark.

It belongs to the CTU2/NCS2 family. Interacts with NCS6 and URM1. May act by forming a heterodimer with NCS6.

It is found in the cytoplasm. It participates in tRNA modification; 5-methoxycarbonylmethyl-2-thiouridine-tRNA biosynthesis. Plays a central role in 2-thiolation of mcm(5)S(2)U at tRNA wobble positions of tRNA(Lys), tRNA(Glu) and tRNA(Gln). May act by forming a heterodimer with NCS6 that ligates sulfur from thiocarboxylated URM1 onto the uridine of tRNAs at wobble position. Prior mcm(5) tRNA modification by the elongator complex is required for 2-thiolation. May also be involved in protein urmylation. The sequence is that of Cytoplasmic tRNA 2-thiolation protein 2 from Saccharomyces cerevisiae (strain AWRI1631) (Baker's yeast).